Here is a 165-residue protein sequence, read N- to C-terminus: uncharacterized protein (165 aa).

Residues 16 to 36 traverse the membrane as a helical segment; it reads ASISSILNFFFFYIMEYFVAV.

It belongs to the asfivirus F165R family.

The protein localises to the host membrane. This is an uncharacterized protein from African swine fever virus (isolate Tick/Malawi/Lil 20-1/1983) (ASFV).